The primary structure comprises 304 residues: Carnitine monooxygenase reductase subunit (304 aa).

The FAD-binding FR-type domain maps to 1-93 (MEQLTPLIKR…SEPKNLFPLA (93 aa)). The 2Fe-2S ferredoxin-type domain occupies 219 to 304 (FTVVLAKSNQ…AKGKKLVLDL (86 aa)). Cysteine 253, cysteine 258, cysteine 261, and cysteine 291 together coordinate [2Fe-2S] cluster.

This sequence belongs to the PDR/VanB family. CntB subfamily. In terms of assembly, composed of an oxygenase subunit and a reductase subunit. FMN is required as a cofactor. Requires [2Fe-2S] cluster as cofactor.

The enzyme catalyses (R)-carnitine + NADH + O2 + H(+) = (3R)-3-hydroxy-4-oxobutanoate + trimethylamine + NAD(+) + H2O. It catalyses the reaction (R)-carnitine + NADPH + O2 + H(+) = (3R)-3-hydroxy-4-oxobutanoate + trimethylamine + NADP(+) + H2O. It participates in amine and polyamine metabolism; carnitine metabolism. Its activity is regulated as follows. Inhibited by EDTA. In terms of biological role, converts carnitine to trimethylamine and malic semialdehyde. Acts on both enantiomers. The polypeptide is Carnitine monooxygenase reductase subunit (Acinetobacter pittii (strain PHEA-2)).